Reading from the N-terminus, the 34-residue chain is Photosystem II reaction center protein T (34 aa).

Residues 3-23 (ALVYTFLLVSTLGIIFFAIFF) form a helical membrane-spanning segment.

It belongs to the PsbT family. PSII is composed of 1 copy each of membrane proteins PsbA, PsbB, PsbC, PsbD, PsbE, PsbF, PsbH, PsbI, PsbJ, PsbK, PsbL, PsbM, PsbT, PsbY, PsbZ, Psb30/Ycf12, at least 3 peripheral proteins of the oxygen-evolving complex and a large number of cofactors. It forms dimeric complexes.

It localises to the plastid. The protein localises to the chloroplast thylakoid membrane. Its function is as follows. Found at the monomer-monomer interface of the photosystem II (PS II) dimer, plays a role in assembly and dimerization of PSII. PSII is a light-driven water plastoquinone oxidoreductase, using light energy to abstract electrons from H(2)O, generating a proton gradient subsequently used for ATP formation. This chain is Photosystem II reaction center protein T, found in Solanum lycopersicum (Tomato).